A 257-amino-acid chain; its full sequence is Phosphonates import ATP-binding protein PhnC (257 aa).

In terms of domain architecture, ABC transporter spans 2-246 (IEFRNVSKVY…KFAEIYGDVA (245 aa)). ATP is bound at residue 35 to 42 (GLSGAGKS).

It belongs to the ABC transporter superfamily. Phosphonates importer (TC 3.A.1.9.1) family. As to quaternary structure, the complex is composed of two ATP-binding proteins (PhnC), two transmembrane proteins (PhnE) and a solute-binding protein (PhnD).

The protein resides in the cell membrane. The catalysed reaction is phosphonate(out) + ATP + H2O = phosphonate(in) + ADP + phosphate + H(+). Its function is as follows. Part of the ABC transporter complex PhnCDE involved in phosphonates import. Responsible for energy coupling to the transport system. The protein is Phosphonates import ATP-binding protein PhnC of Bacillus cereus (strain ZK / E33L).